Here is a 296-residue protein sequence, read N- to C-terminus: Phosphatidylglycerol--prolipoprotein diacylglyceryl transferase (296 aa).

3 consecutive transmembrane segments (helical) span residues Leu17 to Gly37, Met59 to Tyr79, and Gly97 to Trp117. Arg142 is a binding site for a 1,2-diacyl-sn-glycero-3-phospho-(1'-sn-glycerol). The next 2 membrane-spanning stretches (helical) occupy residues Met230–Phe250 and Phe257–Leu277.

This sequence belongs to the Lgt family.

It localises to the cell inner membrane. The catalysed reaction is L-cysteinyl-[prolipoprotein] + a 1,2-diacyl-sn-glycero-3-phospho-(1'-sn-glycerol) = an S-1,2-diacyl-sn-glyceryl-L-cysteinyl-[prolipoprotein] + sn-glycerol 1-phosphate + H(+). It functions in the pathway protein modification; lipoprotein biosynthesis (diacylglyceryl transfer). Catalyzes the transfer of the diacylglyceryl group from phosphatidylglycerol to the sulfhydryl group of the N-terminal cysteine of a prolipoprotein, the first step in the formation of mature lipoproteins. This Burkholderia lata (strain ATCC 17760 / DSM 23089 / LMG 22485 / NCIMB 9086 / R18194 / 383) protein is Phosphatidylglycerol--prolipoprotein diacylglyceryl transferase.